Consider the following 454-residue polypeptide: ABSCISIC ACID-INSENSITIVE 5-like protein 6 (454 aa).

Phosphoserine occurs at positions 32, 55, and 126. Threonine 169 carries the post-translational modification Phosphothreonine. Positions 372–435 (IERRQKRMIK…KNQLLEPLRQ (64 aa)) constitute a bZIP domain. The segment at 374–393 (RRQKRMIKNRESAARSRARK) is basic motif. Residues 400-414 (LEAEIAQLKELNEEL) are leucine-zipper.

This sequence belongs to the bZIP family. ABI5 subfamily. DNA-binding heterodimer. Interacts with ABI3 and the AFP proteins AFP1, AFP2, AFP3 and AFP4. In terms of tissue distribution, expressed in roots and flowers.

The protein resides in the nucleus. Functionally, binds to the ABA-responsive element (ABRE). Mediates stress-responsive ABA signaling. The polypeptide is ABSCISIC ACID-INSENSITIVE 5-like protein 6 (ABF3) (Arabidopsis thaliana (Mouse-ear cress)).